Consider the following 570-residue polypeptide: Rqc2 homolog RqcH (570 aa).

The interval 1-173 is NFACT-N domain; sequence MSFDGMFTYG…LPPAQDKISP (173 aa). The segment at 179–281 is hhH domain; that stretch reads DDILRHLSFQ…ELLDRFYFGK (103 aa). Coiled coils occupy residues 279–336 and 368–430; these read FGKA…TANL and TPSE…VEGK. The segment at 282–434 is coiled-coil-M (CCM); the sequence is AERDRVKQQA…ELVEGKYLRP (153 aa). Positions 446–570 are NFACT-R; the sequence is HNPVLETYES…ADTVIKLKKS (125 aa).

It belongs to the NEMF family. As to quaternary structure, associates with isolated or stalled 50S ribosomal subunits. Binds to RqcP. Interacts with ribosomal protein uL11. Displaced from the 50S subunit by thiostrepton. In crystallized 50S subunits RqcH is variously associated with A/P-site tRNA, P-site tRNA and RqcP, an E-site tRNA or A- and P-site tRNAs and RqcP2(YlmH).

In terms of biological role, key component of the ribosome quality control system (RQC), a ribosome-associated complex that mediates the extraction of incompletely synthesized nascent chains from stalled ribosomes and their subsequent degradation. RqcH recruits Ala-charged tRNA, and with RqcP directs the elongation of stalled nascent chains on 50S ribosomal subunits, leading to non-templated C-terminal alanine extensions (Ala tail). The Ala tail promotes nascent chain degradation. RqcH, RqcP and charged tRNA(Ala) are necessary and sufficient to add an Ala tail to a model stalled nascent peptide; does not add Val. Binds the P-site tRNA in 50S ribosomal subunit, unwinds the anticodon stem and interacts with the splayed anticodon. Selectively binds tRNA(Ala) isoacceptors, even in the absence of the 50S ribosomal subunit. Adds between 1 and at least 8 Ala residues to the nascent chain; detection of the Ala tail requires either deletion of clpP or its inhibition. Binds to 50S ribosomal subunits, at least 30% of which contain a P-site tRNA and thus are obstructed. In Bacillus subtilis (strain 168), this protein is Rqc2 homolog RqcH.